Reading from the N-terminus, the 274-residue chain is Triosephosphate isomerase (274 aa).

31–33 lines the substrate pocket; the sequence is NWK. His118 (electrophile) is an active-site residue. Glu188 acts as the Proton acceptor in catalysis. Substrate is bound by residues Gly194, Ser234, and 255 to 256; that span reads GG.

Belongs to the triosephosphate isomerase family. Homodimer.

It localises to the cytoplasm. It catalyses the reaction D-glyceraldehyde 3-phosphate = dihydroxyacetone phosphate. Its pathway is carbohydrate biosynthesis; gluconeogenesis. The protein operates within carbohydrate degradation; glycolysis; D-glyceraldehyde 3-phosphate from glycerone phosphate: step 1/1. Its function is as follows. Involved in the gluconeogenesis. Catalyzes stereospecifically the conversion of dihydroxyacetone phosphate (DHAP) to D-glyceraldehyde-3-phosphate (G3P). This chain is Triosephosphate isomerase, found in Chlamydia trachomatis serovar A (strain ATCC VR-571B / DSM 19440 / HAR-13).